An 847-amino-acid chain; its full sequence is Glucans biosynthesis glucosyltransferase H (847 aa).

Residues 1–138 (MNKTTEYIDA…KWRTVGTIRR (138 aa)) lie on the Cytoplasmic side of the membrane. Residues 139–156 (YILLILTLAQTVVATWYM) form a helical membrane-spanning segment. The Periplasmic segment spans residues 157–193 (KTILPYQGWALINPMDMVGQDVWVSFMQLLPYMLQTG). The helical transmembrane segment at 194 to 216 (ILILFAVLFCWVSAGFWTALMGF) threads the bilayer. At 217-511 (LQLLIGRDKY…LVKGMHPVHR (295 aa)) the chain is on the cytoplasmic side. Residues 512–534 (AVFLTGVMSYLSAPLWFMFLALS) traverse the membrane as a helical segment. Residues 535–567 (TALQVVHALTEPQYFLQPRQLFPVWPQWRPELA) lie on the Periplasmic side of the membrane. Residues 568-590 (IALFASTMVLLFLPKLLSILLIW) form a helical membrane-spanning segment. At 591 to 602 (CKGTKEYGGFWR) the chain is on the cytoplasmic side. A helical transmembrane segment spans residues 603–625 (VTLSLLLEVLFSVLLAPVRMLFH). At 626-679 (TVFVVSAFLGWEVVWNSPQRDDDSTSWGEAFKRHGSQLLLGLVWAVGMAWLDLR) the chain is on the periplasmic side. The helical transmembrane segment at 680-702 (FLFWLAPIVFSLILSPFVSVISS) threads the bilayer. The Cytoplasmic portion of the chain corresponds to 703–847 (RATVGLRTKR…ALRKPDAASQ (145 aa)).

The protein belongs to the glycosyltransferase 2 family. OpgH subfamily.

The protein resides in the cell inner membrane. Its pathway is glycan metabolism; osmoregulated periplasmic glucan (OPG) biosynthesis. Functionally, involved in the biosynthesis of osmoregulated periplasmic glucans (OPGs). The polypeptide is Glucans biosynthesis glucosyltransferase H (Escherichia coli O6:H1 (strain CFT073 / ATCC 700928 / UPEC)).